A 318-amino-acid chain; its full sequence is NADH-ubiquinone oxidoreductase chain 1 (318 aa).

8 helical membrane-spanning segments follow: residues 2–22 (LLTN…FLTL), 69–89 (LMFI…WAPL), 102–122 (ILFI…SGWA), 147–167 (AIIL…TLTI), 172–192 (MWLI…TLAE), 231–251 (IILM…NPLF), 253–273 (ELHT…FLWI), and 294–314 (LPLT…LAGI).

This sequence belongs to the complex I subunit 1 family.

The protein localises to the mitochondrion inner membrane. The catalysed reaction is a ubiquinone + NADH + 5 H(+)(in) = a ubiquinol + NAD(+) + 4 H(+)(out). Core subunit of the mitochondrial membrane respiratory chain NADH dehydrogenase (Complex I) that is believed to belong to the minimal assembly required for catalysis. Complex I functions in the transfer of electrons from NADH to the respiratory chain. The immediate electron acceptor for the enzyme is believed to be ubiquinone. The chain is NADH-ubiquinone oxidoreductase chain 1 (MT-ND1) from Bradypus variegatus (Brown-throated three-fingered sloth).